The following is a 142-amino-acid chain: 3-hydroxyacyl-[acyl-carrier-protein] dehydratase FabZ (142 aa).

Histidine 48 is an active-site residue.

It belongs to the thioester dehydratase family. FabZ subfamily.

It localises to the cytoplasm. The enzyme catalyses a (3R)-hydroxyacyl-[ACP] = a (2E)-enoyl-[ACP] + H2O. Involved in unsaturated fatty acids biosynthesis. Catalyzes the dehydration of short chain beta-hydroxyacyl-ACPs and long chain saturated and unsaturated beta-hydroxyacyl-ACPs. The polypeptide is 3-hydroxyacyl-[acyl-carrier-protein] dehydratase FabZ (Ruminiclostridium cellulolyticum (strain ATCC 35319 / DSM 5812 / JCM 6584 / H10) (Clostridium cellulolyticum)).